Here is a 106-residue protein sequence, read N- to C-terminus: MICOS complex subunit MIC12 (106 aa).

A helical membrane pass occupies residues 11–27 (VKWTLSVGVIGSVFYLY).

Belongs to the MICOS complex subunit Mic12 family. As to quaternary structure, component of the mitochondrial contact site and cristae organizing system (MICOS) complex.

It is found in the mitochondrion inner membrane. Functionally, component of the MICOS complex, a large protein complex of the mitochondrial inner membrane that plays crucial roles in the maintenance of crista junctions, inner membrane architecture, and formation of contact sites to the outer membrane. The chain is MICOS complex subunit MIC12 (AIM5) from Saccharomyces cerevisiae (strain RM11-1a) (Baker's yeast).